We begin with the raw amino-acid sequence, 583 residues long: Putative glutaminase 3 (583 aa).

The segment at 1 to 29 is disordered; that stretch reads MDNKEKEDEELSDELKDQPGPSEKPRTPT. The substrate site is built by Ser216, Asn265, Glu311, Asn318, Tyr344, Tyr396, and Val414. ANK repeat units lie at residues 482–514, 515–548, and 549–581; these read DGQN…CKDY, DDRT…PCDR, and YDRT…LKGQ.

Belongs to the glutaminase family.

The enzyme catalyses L-glutamine + H2O = L-glutamate + NH4(+). The polypeptide is Putative glutaminase 3 (glna-3) (Caenorhabditis elegans).